The following is a 513-amino-acid chain: MQLNSTEISELIKQRIAQFDVVSEAHNEGTIVSVSDGIIRVHGLADVMQGEMIALPGNRYAIALNLERDSVGAVVMGPYADLAEGMKVKCTGRILEVPVGRGLLGRVVNTLGEPIDGKGPVEHDGFSAVEAIAPGVIERQSVDQPVQTGYKSVDAMIPIGRGQRELVIGDRQTGKTALAVDAIINQRDSGIKCIYVAVGQKASTIANVVRKLEEHGALANTIVVVASASESAALQYLAPYAGCAMGEYFRDRGEDALIIYDDLSKQAVAYRQISLLLRRPPGREAFPGDVFYLHSRLLERAARVNAEYVETFTKGEVKGKTGSLTALPIIETQAGDVSAFVPTNVISITDGQIFLESNLFNAGIRPAVNPGISVSRVGGAAQTKIMKKLSGGIRTALAQYRELAAFSQFASDLDDATRKQLSHGQKVTELLKQKQYAPMSVATQSLVLFAAERGYLEDVELAKVGGFEAALMAYVDREHADLMQQINQTGAYNDEIEGKLKGILDTFKATQSW.

169 to 176 (GDRQTGKT) contacts ATP.

This sequence belongs to the ATPase alpha/beta chains family. F-type ATPases have 2 components, CF(1) - the catalytic core - and CF(0) - the membrane proton channel. CF(1) has five subunits: alpha(3), beta(3), gamma(1), delta(1), epsilon(1). CF(0) has three main subunits: a(1), b(2) and c(9-12). The alpha and beta chains form an alternating ring which encloses part of the gamma chain. CF(1) is attached to CF(0) by a central stalk formed by the gamma and epsilon chains, while a peripheral stalk is formed by the delta and b chains.

The protein resides in the cell inner membrane. It carries out the reaction ATP + H2O + 4 H(+)(in) = ADP + phosphate + 5 H(+)(out). Its function is as follows. Produces ATP from ADP in the presence of a proton gradient across the membrane. The alpha chain is a regulatory subunit. The protein is ATP synthase subunit alpha of Edwardsiella ictaluri (strain 93-146).